Here is a 241-residue protein sequence, read N- to C-terminus: Lipoprotein-releasing system ATP-binding protein LolD 2 (241 aa).

An ABC transporter domain is found at 6-241 (LDAQQLSKSY…YKSYEKSTAV (236 aa)). 43-50 (GASGSGKT) provides a ligand contact to ATP.

The protein belongs to the ABC transporter superfamily. Lipoprotein translocase (TC 3.A.1.125) family. The complex is composed of two ATP-binding proteins (LolD) and two transmembrane proteins (LolC and LolE).

The protein resides in the cell inner membrane. In terms of biological role, part of the ABC transporter complex LolCDE involved in the translocation of mature outer membrane-directed lipoproteins, from the inner membrane to the periplasmic chaperone, LolA. Responsible for the formation of the LolA-lipoprotein complex in an ATP-dependent manner. This chain is Lipoprotein-releasing system ATP-binding protein LolD 2, found in Chlorobium chlorochromatii (strain CaD3).